A 170-amino-acid polypeptide reads, in one-letter code: Large ribosomal subunit protein uL15 (170 aa).

Residues 1–12 (MKLHDLRPAEGA) are compositionally biased toward basic and acidic residues. The interval 1 to 52 (MKLHDLRPAEGAHRKRKRIGRGHGSGKGKTGGKGMMGQKARSGPGPYRTFEG) is disordered. Positions 13 to 26 (HRKRKRIGRGHGSG) are enriched in basic residues.

Belongs to the universal ribosomal protein uL15 family. Part of the 50S ribosomal subunit.

Its function is as follows. Binds to the 23S rRNA. The chain is Large ribosomal subunit protein uL15 from Chloroflexus aurantiacus (strain ATCC 29366 / DSM 635 / J-10-fl).